Here is a 324-residue protein sequence, read N- to C-terminus: Olfactory receptor 6K2 (324 aa).

The Extracellular portion of the chain corresponds to 1-25 (MESPNRTTIQEFIFSAFPYSWVKSV). The N-linked (GlcNAc...) asparagine glycan is linked to asparagine 5. A helical membrane pass occupies residues 26 to 46 (VCFVPLLFIYAFIVVGNLVII). Over 47–54 (TVVQLNTH) the chain is Cytoplasmic. The helical transmembrane segment at 55-75 (LHTPMYTFISALSFLEIWYTT) threads the bilayer. Residues 76–98 (ATIPKMLSSLLSERSISFNGCLL) lie on the Extracellular side of the membrane. A disulfide bridge connects residues cysteine 96 and cysteine 188. A helical membrane pass occupies residues 99–119 (QMYFFHSTGICEVCLLTVMAF). Topologically, residues 120-138 (DHYLAICSPLHYPSIMTPK) are cytoplasmic. Residues 139-159 (LCTQLTLSCCVCGFITPLPEI) form a helical membrane-spanning segment. Residues 160–198 (AWISTLPFCGSNHLEHIFCDFLPVLRLACTDTRAIVMIQ) are Extracellular-facing. A helical membrane pass occupies residues 199–218 (VVDVIHAVEIITAVMLIFMS). Residues 219-238 (YDGIVAVILRIHSAGGRRTA) are Cytoplasmic-facing. The chain crosses the membrane as a helical span at residues 239-259 (FSTCVSHFIVFSLFFGSVTLM). The Extracellular segment spans residues 260 to 272 (YLRFSATYSLFWD). Residues 273–293 (IAIALAFAVLSPFFNPIIYSL) traverse the membrane as a helical segment. Topologically, residues 294–324 (RNKEIKEAIKKHIGQAKIFFSVRPGTSSKIF) are cytoplasmic.

This sequence belongs to the G-protein coupled receptor 1 family.

The protein localises to the cell membrane. In terms of biological role, odorant receptor. The protein is Olfactory receptor 6K2 (OR6K2) of Homo sapiens (Human).